Consider the following 394-residue polypeptide: Elongation factor Tu (394 aa).

The region spanning 10–204 (KPHVNIGTIG…AVDSYIPQPV (195 aa)) is the tr-type G domain. The interval 19 to 26 (GHVDHGKT) is G1. 19–26 (GHVDHGKT) is a binding site for GTP. Thr26 is a Mg(2+) binding site. The G2 stretch occupies residues 60–64 (GITIS). Residues 81–84 (DCPG) are G3. Residues 81-85 (DCPGH) and 136-139 (NKVD) contribute to the GTP site. Residues 136–139 (NKVD) form a G4 region. Residues 174-176 (SAL) form a G5 region.

The protein belongs to the TRAFAC class translation factor GTPase superfamily. Classic translation factor GTPase family. EF-Tu/EF-1A subfamily. In terms of assembly, monomer.

It is found in the cytoplasm. The enzyme catalyses GTP + H2O = GDP + phosphate + H(+). Its function is as follows. GTP hydrolase that promotes the GTP-dependent binding of aminoacyl-tRNA to the A-site of ribosomes during protein biosynthesis. The chain is Elongation factor Tu from Rickettsia massiliae (strain Mtu5).